The primary structure comprises 315 residues: Ribosomal RNA small subunit methyltransferase H (315 aa).

Residues Gly-42 to His-44, Asp-59, Phe-96, Asp-108, and Gln-115 each bind S-adenosyl-L-methionine.

Belongs to the methyltransferase superfamily. RsmH family.

It is found in the cytoplasm. It carries out the reaction cytidine(1402) in 16S rRNA + S-adenosyl-L-methionine = N(4)-methylcytidine(1402) in 16S rRNA + S-adenosyl-L-homocysteine + H(+). Its function is as follows. Specifically methylates the N4 position of cytidine in position 1402 (C1402) of 16S rRNA. In Gemmatimonas aurantiaca (strain DSM 14586 / JCM 11422 / NBRC 100505 / T-27), this protein is Ribosomal RNA small subunit methyltransferase H.